We begin with the raw amino-acid sequence, 363 residues long: 3-isopropylmalate dehydrogenase (363 aa).

78–91 contacts NAD(+); sequence GPKWEHLPPDQQPE. Substrate contacts are provided by Arg99, Arg109, Arg138, and Asp227. Mg(2+) contacts are provided by Asp227, Asp251, and Asp255. 285–297 is an NAD(+) binding site; sequence GSAPDITGKNIAN.

It belongs to the isocitrate and isopropylmalate dehydrogenases family. LeuB type 1 subfamily. In terms of assembly, homodimer. Mg(2+) is required as a cofactor. Requires Mn(2+) as cofactor.

It localises to the cytoplasm. It carries out the reaction (2R,3S)-3-isopropylmalate + NAD(+) = 4-methyl-2-oxopentanoate + CO2 + NADH. It functions in the pathway amino-acid biosynthesis; L-leucine biosynthesis; L-leucine from 3-methyl-2-oxobutanoate: step 3/4. Its function is as follows. Catalyzes the oxidation of 3-carboxy-2-hydroxy-4-methylpentanoate (3-isopropylmalate) to 3-carboxy-4-methyl-2-oxopentanoate. The product decarboxylates to 4-methyl-2 oxopentanoate. This chain is 3-isopropylmalate dehydrogenase, found in Shigella boydii serotype 4 (strain Sb227).